The sequence spans 722 residues: MPLHQLGDKPLTFPSPNSAMENGLDHTPPSRRASPGTPLSPGSLRSAAHSPLDTSKQPLCQLWAEKHGARGTHEVRYVSAGQSVACGWWAFAPPCLQVLNTPKGILFFLCAAAFLQGMTVNGFINTVITSLERRYDLHSYQSGLIASSYDIAACLCLTFVSYFGGSGHKPRWLGWGVLLMGTGSLVFALPHFTAGRYEVELDAGVRTCPANPGAVCADSTSGLSRYQLVFMLGQFLHGVGATPLYTLGVTYLDENVKSSCSPVYIAIFYTAAILGPAAGYLIGGALLNIYTEMGRRTELTTESPLWVGAWWVGFLGSGAAAFFTAVPILGYPRQLPGSQRYAVMRAAEMHQLKDSSRGEASNPDFGKTIRDLPLSIWLLLKNPTFILLCLAGATEATLITGMSTFSPKFLESQFSLSASEAATLFGYLVVPAGGGGTFLGGFFVNKLRLRGSAVIKFCLFCTVVSLLGILVFSLHCPSVPMAGVTASYGGSLLPEGHLNLTAPCNAACSCQPEHYSPVCGSDGLMYFSLCHAGCPAATETNVDGQKVYRDCSCIPQNLSSGFGHATAGKCTSTCQRKPLLLVFIFVVIFFTFLSSIPALTATLRCVRDPQRSFALGIQWIVVRILGGIPGPIAFGWVIDKACLLWQDQCGQQGSCLVYQNSAMSRYILIMGLLYKVLGVLFFAIACFLYKPLSESSDGLETCLPSQSSAPDSATDSQLQSSV.

Positions 1-52 (MPLHQLGDKPLTFPSPNSAMENGLDHTPPSRRASPGTPLSPGSLRSAAHSPL) are disordered. At 1 to 103 (MPLHQLGDKP…PCLQVLNTPK (103 aa)) the chain is on the cytoplasmic side. Serine 34 carries the phosphoserine modification. Phosphothreonine is present on threonine 37. Serine 40, serine 43, serine 46, and serine 50 each carry phosphoserine. The helical transmembrane segment at 104-124 (GILFFLCAAAFLQGMTVNGFI) threads the bilayer. At 125–143 (NTVITSLERRYDLHSYQSG) the chain is on the extracellular side. A helical membrane pass occupies residues 144 to 164 (LIASSYDIAACLCLTFVSYFG). Residues 165-170 (GSGHKP) lie on the Cytoplasmic side of the membrane. A helical transmembrane segment spans residues 171 to 195 (RWLGWGVLLMGTGSLVFALPHFTAG). Residues 196 to 222 (RYEVELDAGVRTCPANPGAVCADSTSG) lie on the Extracellular side of the membrane. A helical membrane pass occupies residues 223–253 (LSRYQLVFMLGQFLHGVGATPLYTLGVTYLD). Residues 254-272 (ENVKSSCSPVYIAIFYTAA) are Cytoplasmic-facing. Residues 273 to 293 (ILGPAAGYLIGGALLNIYTEM) traverse the membrane as a helical segment. Topologically, residues 294–307 (GRRTELTTESPLWV) are extracellular. Residues 308–332 (GAWWVGFLGSGAAAFFTAVPILGYP) traverse the membrane as a helical segment. The Cytoplasmic portion of the chain corresponds to 333–378 (RQLPGSQRYAVMRAAEMHQLKDSSRGEASNPDFGKTIRDLPLSIWL). Residues 379–400 (LLKNPTFILLCLAGATEATLIT) form a helical membrane-spanning segment. At 401-420 (GMSTFSPKFLESQFSLSASE) the chain is on the extracellular side. Residues 421 to 444 (AATLFGYLVVPAGGGGTFLGGFFV) traverse the membrane as a helical segment. Topologically, residues 445–448 (NKLR) are cytoplasmic. Residues 449–471 (LRGSAVIKFCLFCTVVSLLGILV) form a helical membrane-spanning segment. Over 472–580 (FSLHCPSVPM…TSTCQRKPLL (109 aa)) the chain is Extracellular. The region spanning 498–555 (LNLTAPCNAACSCQPEHYSPVCGSDGLMYFSLCHAGCPAATETNVDGQKVYRDCSCIP) is the Kazal-like domain. Residue asparagine 499 is glycosylated (N-linked (GlcNAc...) asparagine). 3 cysteine pairs are disulfide-bonded: cysteine 504-cysteine 534, cysteine 510-cysteine 530, and cysteine 519-cysteine 553. A glycan (N-linked (GlcNAc...) asparagine) is linked at asparagine 557. The chain crosses the membrane as a helical span at residues 581-603 (LVFIFVVIFFTFLSSIPALTATL). Over 604–612 (RCVRDPQRS) the chain is Cytoplasmic. Residues 613–638 (FALGIQWIVVRILGGIPGPIAFGWVI) traverse the membrane as a helical segment. Topologically, residues 639 to 671 (DKACLLWQDQCGQQGSCLVYQNSAMSRYILIMG) are extracellular. The chain crosses the membrane as a helical span at residues 672–689 (LLYKVLGVLFFAIACFLY). Over 690–722 (KPLSESSDGLETCLPSQSSAPDSATDSQLQSSV) the chain is Cytoplasmic. Residues 703–722 (LPSQSSAPDSATDSQLQSSV) form a disordered region.

This sequence belongs to the organo anion transporter (TC 2.A.60) family. As to expression, widely expressed. Expressed in placental trophoblasts. Expressed in pancreas, kidney, skeletal muscle, liver, lung, brain, heart, colon, small intestine, ovary, testis, prostate, thymus and spleen. In testis, primarily localized to Leydig cells.

The protein resides in the cell membrane. It catalyses the reaction 3,3',5-triiodo-L-thyronine(out) + L-glutamate(in) = 3,3',5-triiodo-L-thyronine(in) + L-glutamate(out). It carries out the reaction L-thyroxine(out) + L-glutamate(in) = L-thyroxine(in) + L-glutamate(out). The catalysed reaction is estrone 3-sulfate(out) + L-glutamate(in) = estrone 3-sulfate(in) + L-glutamate(out). The enzyme catalyses taurocholate(out) + L-glutamate(in) = taurocholate(in) + L-glutamate(out). It catalyses the reaction 3,3',5-triiodo-L-thyronine(out) = 3,3',5-triiodo-L-thyronine(in). It carries out the reaction L-thyroxine(out) = L-thyroxine(in). The catalysed reaction is 3,3',5'-triiodo-L-thyronine(out) = 3,3',5'-triiodo-L-thyronine(in). The enzyme catalyses estrone 3-sulfate(out) = estrone 3-sulfate(in). It catalyses the reaction 17beta-estradiol 17-O-(beta-D-glucuronate)(out) = 17beta-estradiol 17-O-(beta-D-glucuronate)(in). It carries out the reaction taurocholate(out) = taurocholate(in). The catalysed reaction is prostaglandin E2(out) = prostaglandin E2(in). Functionally, organic anion antiporter with apparent broad substrate specificity. Recognizes various substrates including thyroid hormones 3,3',5-triiodo-L-thyronine (T3), L-thyroxine (T4) and 3,3',5'-triiodo-L-thyronine (rT3), conjugated steroids such as estrone 3-sulfate and estradiol 17-beta glucuronide, bile acids such as taurocholate and prostanoids such as prostaglandin E2, likely operating in a tissue-specific manner. May be involved in uptake of metabolites from the circulation into organs such as kidney, liver or placenta. Possibly drives the selective transport of thyroid hormones and estrogens coupled to an outward glutamate gradient across the microvillous membrane of the placenta. The transport mechanism, its electrogenicity and potential tissue-specific counterions remain to be elucidated. The polypeptide is Solute carrier organic anion transporter family member 4A1 (SLCO4A1) (Homo sapiens (Human)).